Reading from the N-terminus, the 95-residue chain is UPF0358 protein BcerKBAB4_3775 (95 aa).

Belongs to the UPF0358 family.

The protein is UPF0358 protein BcerKBAB4_3775 of Bacillus mycoides (strain KBAB4) (Bacillus weihenstephanensis).